We begin with the raw amino-acid sequence, 282 residues long: Ribosomal RNA small subunit methyltransferase A (282 aa).

The S-adenosyl-L-methionine site is built by asparagine 28, leucine 30, glycine 55, glutamate 77, aspartate 103, and asparagine 123.

It belongs to the class I-like SAM-binding methyltransferase superfamily. rRNA adenine N(6)-methyltransferase family. RsmA subfamily.

The protein resides in the cytoplasm. It carries out the reaction adenosine(1518)/adenosine(1519) in 16S rRNA + 4 S-adenosyl-L-methionine = N(6)-dimethyladenosine(1518)/N(6)-dimethyladenosine(1519) in 16S rRNA + 4 S-adenosyl-L-homocysteine + 4 H(+). Functionally, specifically dimethylates two adjacent adenosines (A1518 and A1519) in the loop of a conserved hairpin near the 3'-end of 16S rRNA in the 30S particle. May play a critical role in biogenesis of 30S subunits. This Afipia carboxidovorans (strain ATCC 49405 / DSM 1227 / KCTC 32145 / OM5) (Oligotropha carboxidovorans) protein is Ribosomal RNA small subunit methyltransferase A.